Reading from the N-terminus, the 23-residue chain is M-myrmeciitoxin-Mp2b (23 aa).

A Glutamine amide modification is found at Gln23.

Belongs to the formicidae venom precursor-01 superfamily. Ant pilosulin family. In terms of assembly, heterodimer with M-MIITX-Mp2a (pilosulin-3a) (AC Q26464); disulfide-linked. Only heterodimers (and not monomers) have been identified in the venom. As to expression, expressed by the venom gland.

The protein localises to the secreted. Heterodimer protein that may serve both defensive (pain-inducing) and predatory (insecticidal) roles. Has membrane-disrupting activity and shows induction of non-specific calcium influx into cells,. Shows broad-spectrum activity against a diverse range of bacteria, and cell lines, as well as hemolytic activity (EC(50)=2.18 uM). In vivo, shows moderate insecticidal activity against D.melanogaster and potent anthelmintic activity against the veterinary nematode H.contortus. In addition, intraplantar injection into mice induces nocifensive behavior and mechanical allodynia. The sequence is that of M-myrmeciitoxin-Mp2b from Myrmecia pilosula (Jack jumper ant).